The following is a 303-amino-acid chain: Haloalkane dehalogenase (303 aa).

The AB hydrolase-1 domain maps to proline 48–valine 192. The active-site Nucleophile is aspartate 123. Aspartate 250 (proton donor) is an active-site residue. Histidine 280 serves as the catalytic Proton acceptor.

The protein belongs to the haloalkane dehalogenase family. Type 1 subfamily. As to quaternary structure, monomer.

It carries out the reaction 1-haloalkane + H2O = a halide anion + a primary alcohol + H(+). Functionally, catalyzes hydrolytic cleavage of carbon-halogen bonds in halogenated aliphatic compounds, leading to the formation of the corresponding primary alcohols, halide ions and protons. The protein is Haloalkane dehalogenase of Psychrobacter cryohalolentis (strain ATCC BAA-1226 / DSM 17306 / VKM B-2378 / K5).